Here is a 445-residue protein sequence, read N- to C-terminus: StAR-related lipid transfer protein 3 (445 aa).

The Cytoplasmic portion of the chain corresponds to 1 to 51 (MSKLPGELARDLECSLPAVASLGSSLSHSQSLSSHLLPPPEKRRAISDVRR). Residues 46 to 217 (ISDVRRTFCL…YSPPESFAGS (172 aa)) enclose the MENTAL domain. A helical membrane pass occupies residues 52–72 (TFCLFVTFDLLFISLLWIIEL). The Extracellular segment spans residues 73-94 (NTNTGIRKNLEQEIIQYNFKTS). A helical membrane pass occupies residues 95-115 (FFDIFVLAFFRFSGLLLGYAV). Residues 116-120 (LRLQH) lie on the Cytoplasmic side of the membrane. The helical transmembrane segment at 121-141 (WWVIAVTTLVSSAFLIVKVIL) threads the bilayer. The Extracellular segment spans residues 142–148 (SELLSKG). Residues 149–169 (AFGYLLPIVSFVLAWLETWFL) form a helical membrane-spanning segment. The Cytoplasmic portion of the chain corresponds to 170–445 (DFKVLPQEAE…QRISELGARA (276 aa)). 2 short sequence motifs (FFAT) span residues 206–212 (QFYSPPE) and 207–212 (FYSPPE). Residues Ser-209, Ser-217, and Ser-221 each carry the phosphoserine modification. One can recognise an START domain in the interval 248–443 (VVDQILAQEE…LRQRISELGA (196 aa)).

It belongs to the STARD3 family. Homodimer. Interacts (via the MENTAL domain) with STARD3NL. Interacts (via phosphorylated FFAT motif) with VAPA (via MSP domain). Interacts (via phosphorylated FFAT motif) with VAPB (via MSP domain). Interacts (via phosphorylated FFAT motif) with MOSPD2 (via MSP domain); this interaction allows enrichment of MOSPD2 around endosomes. Post-translationally, phosphorylation at Ser-209 is necessary and sufficient for the direct interaction of the phosphorylated FFAT motif with the MSP domain of MOSPD2, VAPA and VAPB and allows the tethering of two membranes that participates in the formation of ER-endosome contacts. Phosphorylation of the FFAT motif leads to conformation changes. Additional phosphorylations around the core FFAT motif (QFYSPPE) are not essential but strengthen the interaction with MOSPD2, VAPA and VAPB. Phosphorylation at Ser-209 of FFAT motif drives membrane tethering between the endoplasmic reticulum and late endosomes via interaction with VAPA and VAPB that in turn allows the efficient transport of sterol mediated by the START domain. Present in retina. Localizes to all neurons of macular retina and especially cone inner segments and axons (at protein level).

The protein localises to the late endosome membrane. It carries out the reaction cholesterol(in) = cholesterol(out). In terms of biological role, sterol-binding protein that mediates cholesterol transport from the endoplasmic reticulum to endosomes. The sterol transport mechanism is triggered by phosphorylation of FFAT motif that leads to membrane tethering between the endoplasmic reticulum and late endosomes via interaction with VAPA and VAPB. Acts as a lipid transfer protein that redirects sterol to the endosome at the expense of the cell membrane and favors membrane formation inside endosomes. May also mediate cholesterol transport between other membranes, such as mitochondria membrane or cell membrane. However, such results need additional experimental evidences; probably mainly mediates cholesterol transport from the endoplasmic reticulum to endosomes. Does not activate transcriptional cholesterol sensing. Able to bind other lipids, such as lutein, a xanthophyll carotenoids that form the macular pigment of the retina. Able to bind other lipids, such as lutein, a xanthophyll carotenoids that form the macular pigment of the retina. In Macaca mulatta (Rhesus macaque), this protein is StAR-related lipid transfer protein 3.